The sequence spans 211 residues: Large ribosomal subunit protein eL13 (211 aa).

An N6-acetyllysine modification is found at Lys16. Phosphoserine is present on residues Ser77 and Ser106. Residues Lys123 and Lys145 each participate in a glycyl lysine isopeptide (Lys-Gly) (interchain with G-Cter in SUMO2) cross-link. Residue Lys174 forms a Glycyl lysine isopeptide (Lys-Gly) (interchain with G-Cter in SUMO1); alternate linkage. Residues Lys174 and Lys177 each participate in a glycyl lysine isopeptide (Lys-Gly) (interchain with G-Cter in SUMO2); alternate cross-link. Lys177 carries the post-translational modification N6-acetyllysine; alternate.

It belongs to the eukaryotic ribosomal protein eL13 family. As to quaternary structure, component of the 60S large ribosomal subunit (LSU).

It is found in the cytoplasm. Component of the ribosome, a large ribonucleoprotein complex responsible for the synthesis of proteins in the cell. The small ribosomal subunit (SSU) binds messenger RNAs (mRNAs) and translates the encoded message by selecting cognate aminoacyl-transfer RNA (tRNA) molecules. The large subunit (LSU) contains the ribosomal catalytic site termed the peptidyl transferase center (PTC), which catalyzes the formation of peptide bonds, thereby polymerizing the amino acids delivered by tRNAs into a polypeptide chain. The nascent polypeptides leave the ribosome through a tunnel in the LSU and interact with protein factors that function in enzymatic processing, targeting, and the membrane insertion of nascent chains at the exit of the ribosomal tunnel. As part of the LSU, it is probably required for its formation and the maturation of rRNAs. Plays a role in bone development. In Oryctolagus cuniculus (Rabbit), this protein is Large ribosomal subunit protein eL13 (RPL13).